Reading from the N-terminus, the 472-residue chain is Sulfate adenylyltransferase subunit 1 (472 aa).

Positions 24–240 (KSLLRFLTCG…ENAEVGTRDL (217 aa)) constitute a tr-type G domain. A G1 region spans residues 33–40 (GSVDDGKS). Position 33-40 (33-40 (GSVDDGKS)) interacts with GTP. Positions 91-95 (GITID) are G2. Positions 112–115 (DTPG) are G3. GTP is bound by residues 112-116 (DTPGH) and 167-170 (NKMD). Residues 167–170 (NKMD) are G4. Residues 204 to 206 (SAL) form a G5 region.

The protein belongs to the TRAFAC class translation factor GTPase superfamily. Classic translation factor GTPase family. CysN/NodQ subfamily. In terms of assembly, heterodimer composed of CysD, the smaller subunit, and CysN.

It carries out the reaction sulfate + ATP + H(+) = adenosine 5'-phosphosulfate + diphosphate. It participates in sulfur metabolism; hydrogen sulfide biosynthesis; sulfite from sulfate: step 1/3. In terms of biological role, with CysD forms the ATP sulfurylase (ATPS) that catalyzes the adenylation of sulfate producing adenosine 5'-phosphosulfate (APS) and diphosphate, the first enzymatic step in sulfur assimilation pathway. APS synthesis involves the formation of a high-energy phosphoric-sulfuric acid anhydride bond driven by GTP hydrolysis by CysN coupled to ATP hydrolysis by CysD. The polypeptide is Sulfate adenylyltransferase subunit 1 (Tolumonas auensis (strain DSM 9187 / NBRC 110442 / TA 4)).